Consider the following 238-residue polypeptide: Zinc import ATP-binding protein ZnuC (238 aa).

The 216-residue stretch at 5 to 220 folds into the ABC transporter domain; sequence ITLKNIHVSF…LEFISIFGLK (216 aa). 37-44 contributes to the ATP binding site; it reads GPNGAGKS.

The protein belongs to the ABC transporter superfamily. Zinc importer (TC 3.A.1.15.5) family. The complex is composed of two ATP-binding proteins (ZnuC), two transmembrane proteins (ZnuB) and a solute-binding protein (ZnuA).

It localises to the cell inner membrane. It carries out the reaction Zn(2+)(out) + ATP(in) + H2O(in) = Zn(2+)(in) + ADP(in) + phosphate(in) + H(+)(in). Part of the ABC transporter complex ZnuABC involved in zinc import. Responsible for energy coupling to the transport system. The chain is Zinc import ATP-binding protein ZnuC from Buchnera aphidicola subsp. Schizaphis graminum (strain Sg).